The primary structure comprises 445 residues: POU domain, class 3, transcription factor 2 (445 aa).

Disordered regions lie at residues 63 to 173, 203 to 269, 336 to 361, and 411 to 445; these read TALS…WRSA, LGAG…TPTS, EADS…KKRT, and EKRM…TPVQ. Residues 68–90 show a composition bias toward gly residues; that stretch reads GGSGGGGGGGGGGGGGGGGGGDG. A compositionally biased stretch (low complexity) spans 125 to 151; the sequence is QQQHQQQQQQQQQQQQQQQQQQQQQQQ. Residues 217–226 show a composition bias toward basic and acidic residues; the sequence is LRDAHDEPHH. Residues 227–237 show a composition bias toward basic residues; that stretch reads ADHHPHPHSHP. The segment covering 239–253 has biased composition (pro residues); that stretch reads QQPPPPPPPQGPPGH. Residues 264-338 form the POU-specific domain; the sequence is EDTPTSDDLE…LLNKWLEEAD (75 aa). Residue Ser-343 is modified to Phosphoserine. Positions 356-415 form a DNA-binding region, homeobox; sequence KRKKRTSIEVSVKGALESHFLKCPKPSAQEITSLADSLQLEKEVVRVWFCNRRQKEKRMT.

Belongs to the POU transcription factor family. Class-3 subfamily. In terms of assembly, interacts with PQBP1. Interaction with ISL1. Expressed specifically at high levels in the brain.

It is found in the nucleus. Transcription factor that plays a key role in neuronal differentiation. Binds preferentially to the recognition sequence which consists of two distinct half-sites, ('GCAT') and ('TAAT'), separated by a non-conserved spacer region of 0, 2, or 3 nucleotides. Acts as a transcriptional activator when binding cooperatively with SOX4, SOX11, or SOX12 to gene promoters. The combination of three transcription factors, ASCL1, POU3F2/BRN2 and MYT1L, is sufficient to reprogram fibroblasts and other somatic cells into induced neuronal (iN) cells in vitro. Acts downstream of ASCL1, accessing chromatin that has been opened by ASCL1, and promotes transcription of neuronal genes. This is POU domain, class 3, transcription factor 2 (Pou3f2) from Rattus norvegicus (Rat).